A 196-amino-acid polypeptide reads, in one-letter code: Transcriptional regulatory protein UhpA (196 aa).

A Response regulatory domain is found at 3 to 116 (TVALIDDHLI…ELIAAVHTVA (114 aa)). Position 54 is a 4-aspartylphosphate (Asp54). Positions 131 to 196 (ASGRQDPLTK…ELARRMFDGW (66 aa)) constitute an HTH luxR-type domain. Residues 155-174 (VKEIAAELGLSPKTVHVHRA) constitute a DNA-binding region (H-T-H motif).

Phosphorylated and dephosphorylated by UhpB.

Its subcellular location is the cytoplasm. Its activity is regulated as follows. Phosphorylation by UhpB enhances DNA binding activity. Part of the UhpABC signaling cascade that controls the expression of the hexose phosphate transporter UhpT. Activates the transcription of the uhpT gene. Acts by binding specifically to the uhpT promoter region. The chain is Transcriptional regulatory protein UhpA (uhpA) from Escherichia coli (strain K12).